A 302-amino-acid chain; its full sequence is Arginase (302 aa).

Residues histidine 103, aspartate 126, histidine 128, and aspartate 130 each coordinate Mn(2+). Residues 128-132 (HGDLN), 139-141 (SGN), and aspartate 180 each bind substrate. Residues aspartate 229 and aspartate 231 each coordinate Mn(2+). Residues threonine 243 and glutamate 274 each coordinate substrate.

The protein belongs to the arginase family. Mn(2+) is required as a cofactor.

It catalyses the reaction L-arginine + H2O = urea + L-ornithine. It functions in the pathway nitrogen metabolism; urea cycle; L-ornithine and urea from L-arginine: step 1/1. In Staphylococcus aureus (strain COL), this protein is Arginase (arg).